Consider the following 367-residue polypeptide: MRVSEGRVTVTVPEQPEAGKGADVFFNPVQELNRDITVAALRAYRERTPRVSTYLDATAASGIRGVRAAANDWETTLCDIDDDATALCEQNLERNDLAASVRRSDANVLMHSEAFDVVDVDPFGTPIPFADAAVQGTKHLLCVTATDTAPLCGAHFESGVRSYGAVPRNTEFHAEMGMRVLLSAMVRTAARYDIAARPILSHATKHYARTYLEFDHGAKVANDCIDELGYVHHCQHCLWRDHDYGLIADPPEDCPVCEKHLQTAGPIWLGRTCDPEFVSAVSEQVSEEMGTADEAKELLATLGAEIDTPTHYDQHRLCKRWGRGAEAMDEFIEKLRDAGYAASRTHYGGTTFKTDADVVEIREATAD.

The 365-residue stretch at Met-1–Thr-365 folds into the Trm1 methyltransferase domain. Residues Arg-34, Arg-64, Asp-79, Asp-105, and Ala-106 each coordinate S-adenosyl-L-methionine. Cys-234, Cys-237, Cys-254, and Cys-257 together coordinate Zn(2+).

The protein belongs to the class I-like SAM-binding methyltransferase superfamily. Trm1 family.

It catalyses the reaction guanosine(26) in tRNA + 2 S-adenosyl-L-methionine = N(2)-dimethylguanosine(26) in tRNA + 2 S-adenosyl-L-homocysteine + 2 H(+). Dimethylates a single guanine residue at position 26 of a number of tRNAs using S-adenosyl-L-methionine as donor of the methyl groups. This is tRNA (guanine(26)-N(2))-dimethyltransferase from Haloarcula marismortui (strain ATCC 43049 / DSM 3752 / JCM 8966 / VKM B-1809) (Halobacterium marismortui).